The sequence spans 367 residues: GMP synthase [glutamine-hydrolyzing] subunit B (367 aa).

One can recognise a GMPS ATP-PPase domain in the interval 2-190; the sequence is FDPASFVKEI…LKLPKEISER (189 aa). An ATP-binding site is contributed by 29-35; the sequence is SGGVDST.

Heterodimer composed of a glutamine amidotransferase subunit (A) and a GMP-binding subunit (B).

The enzyme catalyses XMP + L-glutamine + ATP + H2O = GMP + L-glutamate + AMP + diphosphate + 2 H(+). The protein operates within purine metabolism; GMP biosynthesis; GMP from XMP (L-Gln route): step 1/1. Its function is as follows. Catalyzes the synthesis of GMP from XMP. This chain is GMP synthase [glutamine-hydrolyzing] subunit B, found in Saccharolobus islandicus (strain M.16.27) (Sulfolobus islandicus).